Consider the following 687-residue polypeptide: Auxin response factor 14 (687 aa).

The segment at residues 133–235 (FCKTLTASDT…QLRLGVRRAV (103 aa)) is a DNA-binding region (TF-B3).

It belongs to the ARF family. As to quaternary structure, homo and heterodimers. Expressed in roots, culms, leaves and young panicles.

The protein localises to the nucleus. Functionally, auxin response factors (ARFs) are transcriptional factors that bind specifically to the DNA sequence 5'-TGTCTC-3' found in the auxin-responsive promoter elements (AuxREs). This is Auxin response factor 14 (ARF14) from Oryza sativa subsp. japonica (Rice).